The primary structure comprises 237 residues: MFTTSLRQAQRIVVFTGAGMSTESGVPDFRSSRGLCKGNNPEALASLQAMNDNREAFVDFYRRRMEQLQHVQPHKGYDVLATWEQQLSVTAIITQNTDGLHERAGNQRVLPLHGSIQKLYCIQCGQHYDVDRYMNNQPSCSCGGFIRPSVVLFGEPLDSNILALAEQHSIEADVFIVLGSSLVVSPANLFPRIAKEHGAKLIIVNHDSTPLDTIADYVVNDKPIGSFLVETNRALQK.

The 237-residue stretch at 1 to 237 (MFTTSLRQAQ…LVETNRALQK (237 aa)) folds into the Deacetylase sirtuin-type domain. 7 residues coordinate NAD(+): A18, T22, F29, R30, Q95, D98, and H113. F29 serves as a coordination point for nicotinamide. D98 is a nicotinamide binding site. Catalysis depends on H113, which acts as the Proton acceptor. Zn(2+) is bound by residues C121, C124, C140, and C142. Positions 180, 181, 205, and 224 each coordinate NAD(+).

The protein belongs to the sirtuin family. Class U subfamily. Requires Zn(2+) as cofactor.

The protein localises to the cytoplasm. It catalyses the reaction N(6)-acetyl-L-lysyl-[protein] + NAD(+) + H2O = 2''-O-acetyl-ADP-D-ribose + nicotinamide + L-lysyl-[protein]. In terms of biological role, NAD-dependent protein deacetylase which modulates the activities of several enzymes which are inactive in their acetylated form. The polypeptide is NAD-dependent protein deacetylase (Shouchella clausii (strain KSM-K16) (Alkalihalobacillus clausii)).